Here is a 113-residue protein sequence, read N- to C-terminus: Pancreatic progenitor cell differentiation and proliferation factor B (113 aa).

This sequence belongs to the PPDPF family.

Probable regulator of exocrine pancreas development. This Xenopus laevis (African clawed frog) protein is Pancreatic progenitor cell differentiation and proliferation factor B (ppdpf-b).